Consider the following 328-residue polypeptide: Naphthalene 1,2-dioxygenase system ferredoxin--NAD(P)(+), reductase component (328 aa).

Residues 1–89 enclose the 2Fe-2S ferredoxin-type domain; that stretch reads MELLIQPNNR…NCAIEVPEAD (89 aa). [2Fe-2S] cluster-binding residues include C35, C40, C43, and C73. One can recognise an FAD-binding FR-type domain in the interval 96–193; it reads ARIIKGTVVA…SGPLGTAYLR (98 aa).

Belongs to the bacterial ring-hydroxylating dioxygenase ferredoxin reductase component family. The naphthalene dioxygenase (NDO) multicomponent enzyme system is composed of an electron transfer component and a dioxygenase component (iron sulfur protein (ISP)). The electron transfer component is composed of a ferredoxin reductase (NdoR) and a ferredoxin (NdoA), and the dioxygenase component is formed of a heterohexamer (trimer of heterodimers) of three large alpha subunits (NdoB) and three small beta subunits (NdoC). It depends on [2Fe-2S] cluster as a cofactor. FAD is required as a cofactor.

The catalysed reaction is 2 reduced [2Fe-2S]-[ferredoxin] + NAD(+) + H(+) = 2 oxidized [2Fe-2S]-[ferredoxin] + NADH. It catalyses the reaction 2 reduced [2Fe-2S]-[ferredoxin] + NADP(+) + H(+) = 2 oxidized [2Fe-2S]-[ferredoxin] + NADPH. It functions in the pathway aromatic compound metabolism; naphthalene degradation. Strongly inhibited by p-chloromercuribenzoate. Also inhibited by N-ethylmaleimide and o-phenanthroline. Functionally, component of the naphthalene dioxygenase (NDO) multicomponent enzyme system which catalyzes the incorporation of both atoms of molecular oxygen into naphthalene to form cis-(1R,2S)-dihydroxy-1,2-dihydronaphthalene. Ferredoxin reductase catalyzes the transfer of electrons from NADH to ferredoxin (NdoA). NADPH is also effective but yields only 39% of the activity obtained with NADH. Also able to catalyze the cis-dihydroxylation of biphenyl and phenanthrene. The sequence is that of Naphthalene 1,2-dioxygenase system ferredoxin--NAD(P)(+), reductase component (ndoR) from Pseudomonas putida (Arthrobacter siderocapsulatus).